The sequence spans 210 residues: Cytochrome c biogenesis ATP-binding export protein CcmA (210 aa).

The region spanning Leu3 to Leu205 is the ABC transporter domain. Gly37–Thr44 lines the ATP pocket.

Belongs to the ABC transporter superfamily. CcmA exporter (TC 3.A.1.107) family. The complex is composed of two ATP-binding proteins (CcmA) and two transmembrane proteins (CcmB).

The protein resides in the cell inner membrane. The catalysed reaction is heme b(in) + ATP + H2O = heme b(out) + ADP + phosphate + H(+). Functionally, part of the ABC transporter complex CcmAB involved in the biogenesis of c-type cytochromes; once thought to export heme, this seems not to be the case, but its exact role is uncertain. Responsible for energy coupling to the transport system. This Pseudomonas putida (strain GB-1) protein is Cytochrome c biogenesis ATP-binding export protein CcmA.